The following is a 775-amino-acid chain: MEPPYSLTAHYDEFQEVKYVSRCGAGGARGASLPPGFPLGAARSATGARSGLPRWNRREVCLLSGLVFAAGLCAILAAMLALKYLGPVAAGGGACPEGCPERKAFARAARFLAANLDASIDPCQDFYSFACGGWLRRHAIPDDKLTYGTIAAIGEQNEERLRRLLARPGGGPGGAAQRKVRAFFRSCLDMREIERLGPRPMLEVIEDCGGWDLGGAEERPGVAARWDLNRLLYKAQGVYSAAALFSLTVSLDDRNSSRYVIRIDQDGLTLPERTLYLAQDEDSEKILAAYRVFMERVLSLLGADAVEQKAQEILQVEQQLANITVSEHDDLRRDVSSMYNKVTLGQLQKITPHLRWKWLLDQIFQEDFSEEEEVVLLATDYMQQVSQLIRSTPHRVLHNYLVWRVVVVLSEHLSPPFREALHELAQEMEGSDKPQELARVCLGQANRHFGMALGALFVHEHFSAASKAKVQQLVEDIKYILGQRLEELDWMDAETRAAARAKLQYMMVMVGYPDFLLKPDAVDKEYEFEVHEKTYFKNILNSIRFSIQLSVKKIRQEVDKSTWLLPPQALNAYYLPNKNQMVFPAGILQPTLYDPDFPQSLNYGGIGTIIGHELTHGYDDWGGQYDRSGNLLHWWTEASYSRFLRKAECIVRLYDNFTVYNQRVNGKHTLGENIADMGGLKLAYHAYQKWVREHGPEHPLPRLKYTHDQLFFIAFAQNWCIKRRSQSIYLQVLTDKHAPEHYRVLGSVSQFEEFGRAFHCPKDSPMNPAHKCSVW.

The Cytoplasmic portion of the chain corresponds to 1 to 59 (MEPPYSLTAHYDEFQEVKYVSRCGAGGARGASLPPGFPLGAARSATGARSGLPRWNRRE). Residues 60–82 (VCLLSGLVFAAGLCAILAAMLAL) form a helical; Signal-anchor for type II membrane protein membrane-spanning segment. Topologically, residues 83 to 775 (KYLGPVAAGG…MNPAHKCSVW (693 aa)) are lumenal. The region spanning 98–775 (GCPERKAFAR…MNPAHKCSVW (678 aa)) is the Peptidase M13 domain. Cystine bridges form between C123–C760, C131–C720, C187–C441, and C649–C772. Residues N255 and N322 are each glycosylated (N-linked (GlcNAc...) asparagine). Residue H612 coordinates Zn(2+). E613 is a catalytic residue. Zn(2+) is bound at residue H616. Residue N656 is glycosylated (N-linked (GlcNAc...) asparagine). Residue E672 coordinates Zn(2+). Catalysis depends on D676, which acts as the Proton donor.

This sequence belongs to the peptidase M13 family. Zn(2+) serves as cofactor. In terms of processing, N-glycosylated. In terms of tissue distribution, highly expressed in the CNS, in particular in putamen, spinal cord, medulla and subthalamic nucleus. A strong signal was also detected in uterine subepithelial cells and around renal blood vessels. Detected at lower levels in amygdala, caudate, thalamus, pancreas and skeletal muscle. Detected at very low levels in substantia nigra, cerebellum, cortex, corpus callosum and hippocampus.

The protein localises to the membrane. May contribute to the degradation of peptide hormones and be involved in the inactivation of neuronal peptides. The chain is Endothelin-converting enzyme-like 1 (ECEL1) from Homo sapiens (Human).